The primary structure comprises 735 residues: Polyribonucleotide nucleotidyltransferase (735 aa).

D515 and D521 together coordinate Mg(2+). A KH domain is found at P581–I641. The tract at residues N649–T671 is disordered. The 60-residue stretch at G675–V734 folds into the S1 motif domain.

The protein belongs to the polyribonucleotide nucleotidyltransferase family. It depends on Mg(2+) as a cofactor.

The protein localises to the cytoplasm. It catalyses the reaction RNA(n+1) + phosphate = RNA(n) + a ribonucleoside 5'-diphosphate. In terms of biological role, involved in mRNA degradation. Catalyzes the phosphorolysis of single-stranded polyribonucleotides processively in the 3'- to 5'-direction. The chain is Polyribonucleotide nucleotidyltransferase from Campylobacter curvus (strain 525.92).